The following is a 404-amino-acid chain: Alpha-galactosidase A (404 aa).

The signal sequence occupies residues 1–23 (MRKQLLLGLGLVSALLVSVQASA). Disulfide bonds link Cys-45-Cys-77 and Cys-124-Cys-154. The active-site Nucleophile is Asp-152. 185-189 (EWGDN) is a binding site for substrate. The active-site Proton donor is the Asp-207.

It belongs to the glycosyl hydrolase 27 family.

The enzyme catalyses Hydrolysis of terminal, non-reducing alpha-D-galactose residues in alpha-D-galactosides, including galactose oligosaccharides, galactomannans and galactolipids.. In terms of biological role, hydrolyzes galactomannan found in plant cell wall, by cleaving alpha-1,6-D-galactose side-chains from the mannan backbone. Appears to act in synergy with mannanase (ManA) to elicit hydrolysis of galactomannan. Has greater activity against galactomannans with decreased degree of polymerisation values. To a lesser extent, is also able to degrade other galactosides containing alpha-1,6-linked D-galactose, such as melibiose and stachyose. The sequence is that of Alpha-galactosidase A (agaA) from Cellvibrio japonicus (strain Ueda107) (Pseudomonas fluorescens subsp. cellulosa).